The sequence spans 1568 residues: Pentafunctional AROM polypeptide (1568 aa).

Residues 1–380 (MSQVEKVSIL…YQLKAHEVSK (380 aa)) form a 3-dehydroquinate synthase region. Residues 43–45 (DSN), 81–84 (ENNK), 112–114 (GGV), and D117 each bind NAD(+). R128 lines the 7-phospho-2-dehydro-3-deoxy-D-arabino-heptonate pocket. 137-138 (TT) serves as a coordination point for NAD(+). Residues D144 and K150 each coordinate 7-phospho-2-dehydro-3-deoxy-D-arabino-heptonate. K159 serves as a coordination point for NAD(+). Position 160 (N160) interacts with 7-phospho-2-dehydro-3-deoxy-D-arabino-heptonate. NAD(+) contacts are provided by residues 177–180 (FLTT) and N188. E192 is a Zn(2+) binding site. 7-phospho-2-dehydro-3-deoxy-D-arabino-heptonate contacts are provided by residues 192–195 (EVVK) and K244. The Proton acceptor; for 3-dehydroquinate synthase activity role is filled by E254. 7-phospho-2-dehydro-3-deoxy-D-arabino-heptonate is bound by residues 258-262 (RNLLN) and H265. H265 is a binding site for Zn(2+). H269 functions as the Proton acceptor; for 3-dehydroquinate synthase activity in the catalytic mechanism. Residues H281 and K352 each coordinate 7-phospho-2-dehydro-3-deoxy-D-arabino-heptonate. H281 contacts Zn(2+). The EPSP synthase stretch occupies residues 393–842 (VHPFQEETTP…WDVLHTKFGV (450 aa)). C824 acts as the For EPSP synthase activity in catalysis. The shikimate kinase stretch occupies residues 867-1056 (DKSIVVIGMR…VPKGRSFVLS (190 aa)). Residue 874-881 (GMRAAGKS) coordinates ATP. The 3-dehydroquinase stretch occupies residues 1057–1267 (LACSDLNDIA…SGNGQLTVGE (211 aa)). The interval 1280 to 1568 (RRNFYIVGNP…VYEAVVDDNV (289 aa)) is shikimate dehydrogenase.

This sequence in the N-terminal section; belongs to the sugar phosphate cyclases superfamily. Dehydroquinate synthase family. It in the 2nd section; belongs to the EPSP synthase family. In the 3rd section; belongs to the shikimate kinase family. The protein in the 4th section; belongs to the type-I 3-dehydroquinase family. This sequence in the C-terminal section; belongs to the shikimate dehydrogenase family. Homodimer. Zn(2+) serves as cofactor.

It localises to the cytoplasm. The catalysed reaction is 7-phospho-2-dehydro-3-deoxy-D-arabino-heptonate = 3-dehydroquinate + phosphate. The enzyme catalyses 3-dehydroquinate = 3-dehydroshikimate + H2O. It carries out the reaction shikimate + NADP(+) = 3-dehydroshikimate + NADPH + H(+). It catalyses the reaction shikimate + ATP = 3-phosphoshikimate + ADP + H(+). The catalysed reaction is 3-phosphoshikimate + phosphoenolpyruvate = 5-O-(1-carboxyvinyl)-3-phosphoshikimate + phosphate. It participates in metabolic intermediate biosynthesis; chorismate biosynthesis; chorismate from D-erythrose 4-phosphate and phosphoenolpyruvate: step 2/7. Its pathway is metabolic intermediate biosynthesis; chorismate biosynthesis; chorismate from D-erythrose 4-phosphate and phosphoenolpyruvate: step 3/7. The protein operates within metabolic intermediate biosynthesis; chorismate biosynthesis; chorismate from D-erythrose 4-phosphate and phosphoenolpyruvate: step 4/7. It functions in the pathway metabolic intermediate biosynthesis; chorismate biosynthesis; chorismate from D-erythrose 4-phosphate and phosphoenolpyruvate: step 5/7. It participates in metabolic intermediate biosynthesis; chorismate biosynthesis; chorismate from D-erythrose 4-phosphate and phosphoenolpyruvate: step 6/7. The AROM polypeptide catalyzes 5 consecutive enzymatic reactions in prechorismate polyaromatic amino acid biosynthesis. The sequence is that of Pentafunctional AROM polypeptide from Clavispora lusitaniae (strain ATCC 42720) (Yeast).